Reading from the N-terminus, the 162-residue chain is GLIGAPIAAPIAAPLATSVVSTRTIHAAPVAVAHAAPLAVAHAAPVAVAHAAPLAVAHAAPVAVAHAAPLAVAHAAPAIAYGGYGSGLIGGAYGGGLIGSRSLYGGYGSGLGIARSTPGGYGSGLIGGAYGSGLIGGGLYGARYGLGAPALGHGLIGGAHLY.

A run of 4 repeats spans residues 27–30 (AAPV), 43–46 (AAPV), 59–62 (AAPV), and 75–78 (AAPA).

Its function is as follows. Component of the larval cuticle. The polypeptide is Larval cuticle protein F1 (Tenebrio molitor (Yellow mealworm beetle)).